A 277-amino-acid polypeptide reads, in one-letter code: Xyloglucan endotransglucosylase/hydrolase protein 19 (277 aa).

The N-terminal stretch at methionine 1–alanine 21 is a signal peptide. The GH16 domain maps to glycine 22–tyrosine 213. Glutamate 99 acts as the Nucleophile in catalysis. The Proton donor role is filled by glutamate 103. A xyloglucan-binding site is contributed by glutamate 103. N-linked (GlcNAc...) asparagine glycosylation is present at asparagine 107. Xyloglucan contacts are provided by residues histidine 116–asparagine 118, aspartate 126–glutamate 128, histidine 192–tryptophan 193, and glycine 197. Disulfide bonds link cysteine 221–cysteine 230 and cysteine 262–cysteine 276. A xyloglucan-binding site is contributed by arginine 267.

It belongs to the glycosyl hydrolase 16 family. XTH group 2 subfamily. Contains at least one intrachain disulfide bond essential for its enzymatic activity. As to expression, root specific.

It is found in the secreted. Its subcellular location is the cell wall. It localises to the extracellular space. The protein localises to the apoplast. The catalysed reaction is breaks a beta-(1-&gt;4) bond in the backbone of a xyloglucan and transfers the xyloglucanyl segment on to O-4 of the non-reducing terminal glucose residue of an acceptor, which can be a xyloglucan or an oligosaccharide of xyloglucan.. Possesses xyloglucan endotransglucosylase (XET) activity in vitro. Does not possess xyloglucan endohydrolysis (XEH) activity. Cleaves and religates xyloglucan polymers, an essential constituent of the primary cell wall, and thereby participates in cell wall construction of growing tissues. Involved in cell proliferation in the tissue reunion process of wounded inflorescence stems. Maybe a downstream target of NAC071 as a consequence of auxin action in wounded stems. This Arabidopsis thaliana (Mouse-ear cress) protein is Xyloglucan endotransglucosylase/hydrolase protein 19.